A 299-amino-acid polypeptide reads, in one-letter code: Methylsterol monooxygenase 1-2 (299 aa).

A run of 3 helical transmembrane segments spans residues 39–59 (CHNI…LVFI), 96–116 (FILV…MIEI), and 118–138 (SGLP…YFLV). Positions 132-267 (LVVYFLVEDY…FTYCDYIYGT (136 aa)) constitute a Fatty acid hydroxylase domain. The Histidine box-1 motif lies at 147 to 151 (HRFFH). The Histidine box-2 signature appears at 160 to 164 (HHIHH). The helical transmembrane segment at 189–209 (TFLGPAIAPGHMITFWLWIAL) threads the bilayer. Positions 239-245 (YHDYHHY) match the Histidine box-3 motif.

Belongs to the sterol desaturase family. In terms of assembly, interacts with ACBP1. Fe cation is required as a cofactor. Expressed in embryo sacs, pollen and trichomes. Observed in leaves, roots, siliques and flowers.

Its subcellular location is the endoplasmic reticulum membrane. It catalyses the reaction 4,4-dimethyl-5alpha-cholest-7-en-3beta-ol + 6 Fe(II)-[cytochrome b5] + 3 O2 + 5 H(+) = 4alpha-carboxy-4beta-methyl-5alpha-cholest-7-ene-3beta-ol + 6 Fe(III)-[cytochrome b5] + 4 H2O. It carries out the reaction 24-methylenecycloartanol + 6 Fe(II)-[cytochrome b5] + 3 O2 + 5 H(+) = 4alpha-carboxy-4beta,14alpha-dimethyl-9beta,19-cyclo-5alpha-ergost-24(24(1))-en-3beta-ol + 6 Fe(III)-[cytochrome b5] + 4 H2O. Non-heme iron oxygenase involved in sterols biosynthesis by catalyzing the removal of the first methyl group at the C-4 position. 4,4-dimethyl-9-beta,19-cyclopropylsterols such as 24-methylenecycloartanol are the preferred substrates. Acts as a rate-limiting enzyme in the sterol pathway via interaction with ACBP1; sterols serve as lipid modulators for gene expression of homeodomain-leucine zipper IV transcription factors. Together with SMO1-1, involved in the maintenance of sterol composition to balance auxin and cytokinin activities during embryogenesis. This Arabidopsis thaliana (Mouse-ear cress) protein is Methylsterol monooxygenase 1-2.